Reading from the N-terminus, the 340-residue chain is MTIILATGGTGGHVFPAITLAKALKVQGHNCILFTDQKTINIESYILPLCKPSGNKLKFLFLLMYSCVLALYQTRKLKPKLIIGFGSYASFPTLLAAKILSIPIVLHEQNTVLGRVNRFFFKSAKLIATSFPETKYAEGSKCVFTGNFVDIEAQGYSRAETVLNVLIIAGSQGANFFDDVVSSVICDLPVEVKERIRVTQQCTKKNINKVKSLYKSEGIDCELSEFFDDMENKLANAHLVISRAGATSIAEITLAERPAVYIPYPHSKDNHQFYNAKHIEDSGAAVMVEQNSNAKKNLGELLVDLLQNCQKLRDMANNTKKTRIRNGVTEFIKAIAQELS.

UDP-N-acetyl-alpha-D-glucosamine contacts are provided by residues threonine 10 to glycine 12, asparagine 110, serine 171, and glutamine 272.

Belongs to the glycosyltransferase 28 family. MurG subfamily.

It localises to the cell membrane. It carries out the reaction di-trans,octa-cis-undecaprenyl diphospho-N-acetyl-alpha-D-muramoyl-L-alanyl-D-glutamyl-meso-2,6-diaminopimeloyl-D-alanyl-D-alanine + UDP-N-acetyl-alpha-D-glucosamine = di-trans,octa-cis-undecaprenyl diphospho-[N-acetyl-alpha-D-glucosaminyl-(1-&gt;4)]-N-acetyl-alpha-D-muramoyl-L-alanyl-D-glutamyl-meso-2,6-diaminopimeloyl-D-alanyl-D-alanine + UDP + H(+). It participates in cell wall biogenesis; peptidoglycan biosynthesis. Functionally, cell wall formation. Catalyzes the transfer of a GlcNAc subunit on undecaprenyl-pyrophosphoryl-MurNAc-pentapeptide (lipid intermediate I) to form undecaprenyl-pyrophosphoryl-MurNAc-(pentapeptide)GlcNAc (lipid intermediate II). The protein is UDP-N-acetylglucosamine--N-acetylmuramyl-(pentapeptide) pyrophosphoryl-undecaprenol N-acetylglucosamine transferase of Wolbachia pipientis subsp. Culex pipiens (strain wPip).